We begin with the raw amino-acid sequence, 167 residues long: Type IV major pilin protein PilE (167 aa).

A propeptide spans 1 to 7 (MNTLQKG) (leader sequence). N-methylphenylalanine is present on Phe8. A helical transmembrane segment spans residues 8 to 28 (FTLIELMIVIAIVGILAAVAL). Ser70 is a glycosylation site (O-linked (GlcNAc...) serine). Residues Cys127 and Cys160 are joined by a disulfide bond.

Belongs to the N-Me-Phe pilin family. As to quaternary structure, the pili are polar flexible filaments of about 5.4 nanometers diameter and 2.5 micrometers average length; they consist of only a single polypeptide chain arranged in a helical configuration of five subunits per turn in the assembled pilus.

The protein resides in the fimbrium. It localises to the membrane. Functionally, major component of the type IV pilus (T4P) that plays a role in cellular adherence, microcolony formation, resistance to neutrophil mediated killing, twitching motility as well as transformation. Mediates the attachment and the formation of bacterial microcolonies on host epithelial cells. Mechanistically, pili retractation induces host NF-kappa-B activation in infected cells, which is temporally associated with the formation of gonococcal microcolonies. This chain is Type IV major pilin protein PilE (pilE), found in Neisseria gonorrhoeae.